Reading from the N-terminus, the 502-residue chain is ATP synthase subunit alpha (502 aa).

The segment at 115–135 (VDGLGPINTTNTRPIESPAPG) is disordered. An ATP-binding site is contributed by 169–176 (GDRQTGKT).

Belongs to the ATPase alpha/beta chains family. In terms of assembly, F-type ATPases have 2 components, CF(1) - the catalytic core - and CF(0) - the membrane proton channel. CF(1) has five subunits: alpha(3), beta(3), gamma(1), delta(1), epsilon(1). CF(0) has three main subunits: a(1), b(2) and c(9-12). The alpha and beta chains form an alternating ring which encloses part of the gamma chain. CF(1) is attached to CF(0) by a central stalk formed by the gamma and epsilon chains, while a peripheral stalk is formed by the delta and b chains.

The protein localises to the cell membrane. The catalysed reaction is ATP + H2O + 4 H(+)(in) = ADP + phosphate + 5 H(+)(out). In terms of biological role, produces ATP from ADP in the presence of a proton gradient across the membrane. The alpha chain is a regulatory subunit. The sequence is that of ATP synthase subunit alpha from Bacillus anthracis (strain A0248).